Reading from the N-terminus, the 990-residue chain is Insulin-degrading enzyme (990 aa).

Residue His81 coordinates Zn(2+). The active-site Proton acceptor is Glu84. 2 residues coordinate Zn(2+): His85 and Glu162.

It belongs to the peptidase M16 family. It depends on Zn(2+) as a cofactor.

The enzyme catalyses Degradation of insulin, glucagon and other polypeptides. No action on proteins.. Can cleave insulin and TGF-alpha. The sequence is that of Insulin-degrading enzyme (Ide) from Drosophila melanogaster (Fruit fly).